A 462-amino-acid chain; its full sequence is Na(+)/H(+) antiporter NhaA 2 (462 aa).

The interval 1-31 (MKSSTREQTPVTSPTPHDPTPPTPPRGSTPL) is disordered. Residues 16 to 27 (PHDPTPPTPPRG) show a composition bias toward pro residues. The next 11 membrane-spanning stretches (helical) occupy residues 52 to 72 (IGGALLLLGTVVALVWANSPW), 96 to 116 (LTLGQWAADGLLAIFFFIAGL), 134 to 154 (LVPVAAAVGGMAVPAVVYVLV), 165 to 185 (GWAIPTATDIAFAVAVLAVIS), 195 to 215 (FLLTLAVVDDLLAITIIAIFY), 218 to 238 (TLAVLPLLGALAVIAVFGLLV), 244 to 264 (SWWLLIPLAVVAWALMHASGI), 309 to 329 (FAVPVFAFFSAGVTVGGLSGL), 337 to 357 (VALGIVAGLVVGKAAGILGAT), 382 to 402 (LLGGIGFTVSLLIGELAFGAG), and 408 to 428 (HVKVGVLTGSLLAAALAAVVL).

It belongs to the NhaA Na(+)/H(+) (TC 2.A.33) antiporter family.

It is found in the cell membrane. It catalyses the reaction Na(+)(in) + 2 H(+)(out) = Na(+)(out) + 2 H(+)(in). Its function is as follows. Na(+)/H(+) antiporter that extrudes sodium in exchange for external protons. This chain is Na(+)/H(+) antiporter NhaA 2, found in Kineococcus radiotolerans (strain ATCC BAA-149 / DSM 14245 / SRS30216).